The following is a 418-amino-acid chain: tRNA-2-methylthio-N(6)-dimethylallyladenosine synthase (418 aa).

Positions 2-118 (PGYYLWTIGC…WGEIPEGFIL (117 aa)) constitute an MTTase N-terminal domain. Residues C11, C47, C81, C134, C138, and C141 each contribute to the [4Fe-4S] cluster site. Residues 120 to 352 (LKPPVSASIT…DLQKETVSKA (233 aa)) form the Radical SAM core domain. Positions 354–414 (SALVDTFAEV…PWSLQAKLVK (61 aa)) constitute a TRAM domain.

It belongs to the methylthiotransferase family. MiaB subfamily. In terms of assembly, monomer. The cofactor is [4Fe-4S] cluster.

Its subcellular location is the cytoplasm. It catalyses the reaction N(6)-dimethylallyladenosine(37) in tRNA + (sulfur carrier)-SH + AH2 + 2 S-adenosyl-L-methionine = 2-methylsulfanyl-N(6)-dimethylallyladenosine(37) in tRNA + (sulfur carrier)-H + 5'-deoxyadenosine + L-methionine + A + S-adenosyl-L-homocysteine + 2 H(+). Its function is as follows. Catalyzes the methylthiolation of N6-(dimethylallyl)adenosine (i(6)A), leading to the formation of 2-methylthio-N6-(dimethylallyl)adenosine (ms(2)i(6)A) at position 37 in tRNAs that read codons beginning with uridine. The chain is tRNA-2-methylthio-N(6)-dimethylallyladenosine synthase from Dehalococcoides mccartyi (strain ATCC BAA-2266 / KCTC 15142 / 195) (Dehalococcoides ethenogenes (strain 195)).